The chain runs to 703 residues: FERM domain-containing protein 7 (703 aa).

The region spanning 2 to 282 is the FERM domain; that stretch reads LHLKVQFLDD…EYHAFFRLSE (281 aa). The stretch at 525 to 552 forms a coiled coil; the sequence is RNMRIKSLQQDLQELQEAMARTSGRSNI.

As to expression, in the developing cerebral cortex, strong expression is observed in the ventricular and intermediate zones at 13 and 17 dpc. At 17 dpc and P0, expression appears to be restricted to the cortical plate. In neonates, highly expressed in cortex, hippocampus, cerebellum, olfactory bulb and eye with little or no expression in liver, kidney, skeletal muscle or heart muscle (at protein level).

Its subcellular location is the cell projection. The protein localises to the neuron projection. It is found in the growth cone. Plays a role in neurite development, may be through the activation of the GTPase RAC1. Plays a role in the control of eye movement and gaze stability. In Mus musculus (Mouse), this protein is FERM domain-containing protein 7.